The chain runs to 168 residues: Cyclin-dependent kinase 4 inhibitor C (168 aa).

ANK repeat units lie at residues 4-33 (PWGN…NVNA), 37-65 (FGRT…NPDL), 69-98 (TGFA…DVNI), and 102-132 (EGNL…NVGH).

Belongs to the CDKN2 cyclin-dependent kinase inhibitor family. Heterodimer of p18 with CDK6. Highest levels found in skeletal muscle. Also found in pancreas and heart.

Its function is as follows. Interacts strongly with CDK6, weakly with CDK4. Inhibits cell growth and proliferation with a correlated dependence on endogenous retinoblastoma protein RB. This chain is Cyclin-dependent kinase 4 inhibitor C (CDKN2C), found in Homo sapiens (Human).